The chain runs to 415 residues: von Willebrand factor A domain-containing protein 1 (415 aa).

Residues 1–18 (MLFWTAFSMALSLRLALA) form the signal peptide. The 176-residue stretch at 34–209 (DLLFLLDSSA…IIARELRGSI (176 aa)) folds into the VWFA domain. Phosphoserine is present on residues S74, S80, and S93. 2 Fibronectin type-III domains span residues 214 to 305 (QPQQ…LQEE) and 307 to 403 (GPER…TRAP). An N-linked (GlcNAc...) asparagine glycan is attached at N264. C369 and C393 are oxidised to a cystine. Residues 391–415 (KACTASGARTRAPQSMRPEAGPREP) form a disordered region.

Homodimer or homomultimer; disulfide-linked. Interacts with HSPG2. Post-translationally, N-glycosylated. In terms of tissue distribution, expressed at high levels in the chondrocytes. Detected in the vasculature of neural tissues, in basement membrane structures of the peripheral nervous system, in the apical ectodermal ridge of developing limb buds, and in skeletal and cardiac muscle (at protein level).

The protein localises to the secreted. It is found in the extracellular space. Its subcellular location is the extracellular matrix. The protein resides in the basement membrane. Promotes matrix assembly. Involved in the organization of skeletal muscles and in the formation of neuromuscular junctions. The chain is von Willebrand factor A domain-containing protein 1 (Vwa1) from Mus musculus (Mouse).